The following is a 201-amino-acid chain: Holliday junction branch migration complex subunit RuvA (201 aa).

The domain I stretch occupies residues 1-63 (MYDYIKGTVT…EDNISLFGFQ (63 aa)). The interval 64-142 (TTEERYLFKK…DVVASEIVYV (79 aa)) is domain II. Residues 143–153 (APENDMVAGLS) form a flexible linker region. Positions 153-201 (SPQLEEAVLALEALGYSTRELKKVIPKLAKEEDLTSDAYIKLALQLMTK) are domain III.

The protein belongs to the RuvA family. In terms of assembly, homotetramer. Forms an RuvA(8)-RuvB(12)-Holliday junction (HJ) complex. HJ DNA is sandwiched between 2 RuvA tetramers; dsDNA enters through RuvA and exits via RuvB. An RuvB hexamer assembles on each DNA strand where it exits the tetramer. Each RuvB hexamer is contacted by two RuvA subunits (via domain III) on 2 adjacent RuvB subunits; this complex drives branch migration. In the full resolvosome a probable DNA-RuvA(4)-RuvB(12)-RuvC(2) complex forms which resolves the HJ.

It is found in the cytoplasm. The RuvA-RuvB-RuvC complex processes Holliday junction (HJ) DNA during genetic recombination and DNA repair, while the RuvA-RuvB complex plays an important role in the rescue of blocked DNA replication forks via replication fork reversal (RFR). RuvA specifically binds to HJ cruciform DNA, conferring on it an open structure. The RuvB hexamer acts as an ATP-dependent pump, pulling dsDNA into and through the RuvAB complex. HJ branch migration allows RuvC to scan DNA until it finds its consensus sequence, where it cleaves and resolves the cruciform DNA. This chain is Holliday junction branch migration complex subunit RuvA, found in Listeria monocytogenes serotype 4a (strain HCC23).